The chain runs to 492 residues: GTPase Der (492 aa).

EngA-type G domains are found at residues 3 to 167 (PVVA…PAPE) and 188 to 363 (ICIA…AQYA). GTP-binding positions include 9–16 (GRPNVGKS), 56–60 (DTGGF), 119–122 (NKVE), 194–201 (GRPNVGKS), 241–245 (DTAGI), and 306–309 (NKWD). The 85-residue stretch at 364 to 448 (YRINTGLLNR…PIRLLFRAKT (85 aa)) folds into the KH-like domain. The disordered stretch occupies residues 464–492 (VEKKEKKTTRRKKERKEQSRRKRVRDLKG). Basic residues predominate over residues 469–492 (KKTTRRKKERKEQSRRKRVRDLKG).

It belongs to the TRAFAC class TrmE-Era-EngA-EngB-Septin-like GTPase superfamily. EngA (Der) GTPase family. Associates with the 50S ribosomal subunit.

Its function is as follows. GTPase that plays an essential role in the late steps of ribosome biogenesis. In Desulforapulum autotrophicum (strain ATCC 43914 / DSM 3382 / VKM B-1955 / HRM2) (Desulfobacterium autotrophicum), this protein is GTPase Der.